Reading from the N-terminus, the 481-residue chain is Mediator of RNA polymerase II transcription subunit 3 (481 aa).

Residues 79–107 (QEKFQMIRSKVLGLTERLQELSNDFEELQ) adopt a coiled-coil conformation. 2 disordered regions span residues 140–261 (AGAS…MGTP) and 415–463 (NTKG…KSAY). Over residues 148-203 (TPTPAAATPTTAPTPGAGTKKAAKTAPTPTATATIGTPSNNAPTPATTATTPGTQA) the composition is skewed to low complexity. The segment covering 204-213 (KKPRKPRQTK) has biased composition (basic residues). The segment covering 214–248 (KQQQAAAAAAAVAQAQAQAQAQAQNQNQNNMQNKN) has biased composition (low complexity). The span at 249–259 (ISNPGMNSNMG) shows a compositional bias: polar residues. The span at 428-458 (MDQNQNQNQSQNQSQNQNQSMNMNMNNDSNN) shows a compositional bias: low complexity.

The protein belongs to the Mediator complex subunit 3 family. In terms of assembly, component of the Mediator complex.

The protein localises to the nucleus. Functionally, component of the Mediator complex, a coactivator involved in regulated gene transcription of nearly all RNA polymerase II-dependent genes. Mediator functions as a bridge to convey information from gene-specific regulatory proteins to the basal RNA polymerase II transcription machinery. Mediator is recruited to promoters by direct interactions with regulatory proteins and serves as a scaffold for the assembly of a functional preinitiation complex with RNA polymerase II and the general transcription factors. The polypeptide is Mediator of RNA polymerase II transcription subunit 3 (PGD1) (Candida glabrata (strain ATCC 2001 / BCRC 20586 / JCM 3761 / NBRC 0622 / NRRL Y-65 / CBS 138) (Yeast)).